The primary structure comprises 300 residues: F-box/LRR-repeat protein 15 (300 aa).

N-acetylmethionine is present on methionine 1. The F-box domain occupies 19–66 (LLDLPWEDVLLPHILSRVPLRQLLRLQRVSRAFRALVQLHLAGLRRFD). Residues 113 to 269 (NPQLRSVALA…EPSLSRLRKR (157 aa)) are interaction with SMURF1. LRR repeat units lie at residues 141–162 (RLQR…RGLA), 167–188 (ALEE…VYLA), 194–215 (GLRS…QELA), 220–241 (ELEH…RTLA), and 246–267 (ALRS…SRLR).

Belongs to the FBXL15 family. In terms of assembly, part of the SCF (SKP1-CUL1-F-box) E3 ubiquitin-protein ligase complex SCF(FBXL15) composed of CUL1, SKP1, RBX1 and FBXL15.

Its subcellular location is the cytoplasm. The protein operates within protein modification; protein ubiquitination. Its function is as follows. Substrate recognition component of a SCF (SKP1-CUL1-F-box protein) E3 ubiquitin-protein ligase complex which mediates the ubiquitination and subsequent proteasomal degradation of SMURF1, thereby acting as a positive regulator of the BMP signaling pathway. Required for dorsal/ventral pattern formation and bone mass maintenance. Also mediates ubiquitination of SMURF2 and WWP2. The sequence is that of F-box/LRR-repeat protein 15 (FBXL15) from Canis lupus familiaris (Dog).